A 264-amino-acid polypeptide reads, in one-letter code: Late embryogenesis abundant protein D-34 (264 aa).

Residues 1–16 are compositionally biased toward low complexity; sequence MSQGQPRRPQQPAGQG. A disordered region spans residues 1-23; the sequence is MSQGQPRRPQQPAGQGENQEPIK. 3 SMP domains span residues 22 to 76, 138 to 194, and 203 to 261; these read IKYG…RNEQ, ITIG…AHNA, and IKLN…LNEN.

The protein belongs to the LEA type SMP family.

Functionally, LEA proteins are late embryonic proteins abundant in higher plant seed embryos. There are two subsets of LEA proteins (5a and 5b), the first ones are expressed when the cotyledon weight reach 80 mg and the second set are expressed above 100 mg. The function of those proteins is not known. The chain is Late embryogenesis abundant protein D-34 from Gossypium hirsutum (Upland cotton).